The sequence spans 131 residues: uncharacterized protein (131 aa).

This is an uncharacterized protein from Haemophilus influenzae (strain ATCC 51907 / DSM 11121 / KW20 / Rd).